The following is a 537-amino-acid chain: Trypsin-resistant surface T6 protein (537 aa).

Residues 1–22 (MLACLAILAVVGLGMTRVSALS) form the signal peptide. The interval 310 to 330 (GNTYDNLDKKPDKGNGITSKE) is hydrophilic. The LPXTG sorting signal signature appears at 504-508 (LPSTG). Position 507 is a pentaglycyl murein peptidoglycan amidated threonine (Thr-507). The propeptide at 508–537 (GSIGTYLFKAIGSAAMIGAIGIYIVKRRKA) is removed by sortase.

It localises to the secreted. Its subcellular location is the cell wall. The chain is Trypsin-resistant surface T6 protein (tee6) from Streptococcus pyogenes serotype M6 (strain ATCC BAA-946 / MGAS10394).